A 197-amino-acid chain; its full sequence is Imidazoleglycerol-phosphate dehydratase (197 aa).

This sequence belongs to the imidazoleglycerol-phosphate dehydratase family.

It localises to the cytoplasm. The catalysed reaction is D-erythro-1-(imidazol-4-yl)glycerol 3-phosphate = 3-(imidazol-4-yl)-2-oxopropyl phosphate + H2O. It functions in the pathway amino-acid biosynthesis; L-histidine biosynthesis; L-histidine from 5-phospho-alpha-D-ribose 1-diphosphate: step 6/9. In Leptospira biflexa serovar Patoc (strain Patoc 1 / Ames), this protein is Imidazoleglycerol-phosphate dehydratase.